We begin with the raw amino-acid sequence, 100 residues long: Small ribosomal subunit protein uS14c (100 aa).

Belongs to the universal ribosomal protein uS14 family. Part of the 30S ribosomal subunit.

Its subcellular location is the plastid. The protein resides in the chloroplast. Binds 16S rRNA, required for the assembly of 30S particles. The polypeptide is Small ribosomal subunit protein uS14c (Nephroselmis olivacea (Green alga)).